We begin with the raw amino-acid sequence, 593 residues long: AT-rich interactive domain-containing protein 3A (593 aa).

The interval 14–222 is disordered; sequence QQRARQELEA…PQLQPPDHGD (209 aa). Over residues 41–53 the composition is skewed to basic and acidic residues; the sequence is AAPDEDREPESAR. Residues 54–87 show a composition bias toward low complexity; that stretch reads MQRAQMAALAAMRAAAAGLGHPASPGGSEDGPPG. A phosphoserine mark is found at Ser-77, Ser-81, and Ser-88. Thr-98 bears the Phosphothreonine mark. Phosphoserine occurs at positions 101 and 119. Positions 104–127 are enriched in basic and acidic residues; the sequence is RGREGPGEEHFEDMASDEDMKPKW. An acidic region spans residues 119–156; sequence SDEDMKPKWEEEEMEEDLGEDEEEEEEDYEDEEEEEDE. Positions 128-158 are enriched in acidic residues; the sequence is EEEEMEEDLGEDEEEEEEDYEDEEEEEDEEG. The ARID domain occupies 238–330; the sequence is DPKRKEFLDD…YLYPYECEKR (93 aa). Residues Ser-353 and Ser-362 each carry the phosphoserine modification. Glycyl lysine isopeptide (Lys-Gly) (interchain with G-Cter in SUMO2) cross-links involve residues Lys-398, Lys-399, Lys-452, and Lys-462. The REKLES domain occupies 444 to 541; the sequence is AALEQLREKL…GVLFAQPPAP (98 aa). Residues 445 to 488 form an important for nuclear localization region; sequence ALEQLREKLESAEPPEKKMALVADEQQRLMQRALQQNFLAMAAQ. A homodimerization region spans residues 490–513; it reads PMSIRINSQASESRQDSAVNLTGT. 2 disordered regions span residues 497–516 and 539–593; these read SQAS…TNGS and PAPT…NSLP. Positions 537-557 are important for cytoplasmic localization; that stretch reads QPPAPTPTSAPNKGGGGGGGS. Residues 549–576 are compositionally biased toward gly residues; it reads KGGGGGGGSSSNAGGRGGNTGTSGGQAG. Residues 580 to 593 are compositionally biased toward low complexity; that stretch reads LSTPSTSTSNNSLP.

In terms of assembly, homodimer. Heterodimer with ARID3B. Interacts with E2F1. Interacts with GTF2I and BTK. In terms of tissue distribution, widely expressed, with highest expression in skeletal muscle, thalamus, and colon.

The protein localises to the nucleus. It is found in the cytoplasm. Functionally, transcription factor which may be involved in the control of cell cycle progression by the RB1/E2F1 pathway and in B-cell differentiation. The sequence is that of AT-rich interactive domain-containing protein 3A (ARID3A) from Homo sapiens (Human).